A 301-amino-acid polypeptide reads, in one-letter code: Acetyl-coenzyme A carboxylase carboxyl transferase subunit beta (301 aa).

One can recognise a CoA carboxyltransferase N-terminal domain in the interval 25-294 (LWIKDPSTGE…NSDAPEHEKT (270 aa)). The segment at 282-301 (QPGNSDAPEHEKTEATDKAA) is disordered. Basic and acidic residues predominate over residues 288 to 301 (APEHEKTEATDKAA).

This sequence belongs to the AccD/PCCB family. In terms of assembly, acetyl-CoA carboxylase is a heterohexamer composed of biotin carboxyl carrier protein (AccB), biotin carboxylase (AccC) and two subunits each of ACCase subunit alpha (AccA) and ACCase subunit beta (AccD).

It is found in the cytoplasm. The enzyme catalyses N(6)-carboxybiotinyl-L-lysyl-[protein] + acetyl-CoA = N(6)-biotinyl-L-lysyl-[protein] + malonyl-CoA. It functions in the pathway lipid metabolism; malonyl-CoA biosynthesis; malonyl-CoA from acetyl-CoA: step 1/1. Functionally, component of the acetyl coenzyme A carboxylase (ACC) complex. Biotin carboxylase (BC) catalyzes the carboxylation of biotin on its carrier protein (BCCP) and then the CO(2) group is transferred by the transcarboxylase to acetyl-CoA to form malonyl-CoA. The chain is Acetyl-coenzyme A carboxylase carboxyl transferase subunit beta from Brucella anthropi (strain ATCC 49188 / DSM 6882 / CCUG 24695 / JCM 21032 / LMG 3331 / NBRC 15819 / NCTC 12168 / Alc 37) (Ochrobactrum anthropi).